Here is a 196-residue protein sequence, read N- to C-terminus: Ribonuclease HII (196 aa).

Residues 9–196 (NLIAGVDEVG…APVKRALNLV (188 aa)) enclose the RNase H type-2 domain. The a divalent metal cation site is built by Asp-15, Glu-16, and Asp-107.

The protein belongs to the RNase HII family. Requires Mn(2+) as cofactor. Mg(2+) serves as cofactor.

It is found in the cytoplasm. It catalyses the reaction Endonucleolytic cleavage to 5'-phosphomonoester.. Functionally, endonuclease that specifically degrades the RNA of RNA-DNA hybrids. The polypeptide is Ribonuclease HII (Proteus mirabilis (strain HI4320)).